Reading from the N-terminus, the 56-residue chain is Large ribosomal subunit protein bL32c (56 aa).

A compositionally biased stretch (basic residues) spans 1–20 (MAAPKKRTSKSRKNMRKSTW). Positions 1–28 (MAAPKKRTSKSRKNMRKSTWKRQAATQA) are disordered.

Belongs to the bacterial ribosomal protein bL32 family.

It localises to the plastid. The protein localises to the chloroplast. This chain is Large ribosomal subunit protein bL32c (rpl32), found in Mesostigma viride (Green alga).